The sequence spans 395 residues: Phosphoserine aminotransferase (395 aa).

The residue at position 20 (T20) is a Phosphothreonine. 80-81 (GT) provides a ligand contact to pyridoxal 5'-phosphate. S112 carries the phosphoserine modification. Positions 113, 170, 194, and 217 each coordinate pyridoxal 5'-phosphate. K218 carries the N6-(pyridoxal phosphate)lysine modification. Position 271–272 (271–272 (NT)) interacts with pyridoxal 5'-phosphate.

This sequence belongs to the class-V pyridoxal-phosphate-dependent aminotransferase family. SerC subfamily. As to quaternary structure, homodimer. Pyridoxal 5'-phosphate serves as cofactor.

The enzyme catalyses O-phospho-L-serine + 2-oxoglutarate = 3-phosphooxypyruvate + L-glutamate. The catalysed reaction is 4-(phosphooxy)-L-threonine + 2-oxoglutarate = (R)-3-hydroxy-2-oxo-4-phosphooxybutanoate + L-glutamate. The protein operates within amino-acid biosynthesis; L-serine biosynthesis; L-serine from 3-phospho-D-glycerate: step 2/3. Phosphoserine aminotransferase (PSAT) is a pyridoxal 5'-phosphate-dependent enzyme involved in the second step of the phosphorylated pathway of serine biosynthesis. Catalyzes the reversible conversion of 3-phosphohydroxypyruvate to phosphoserine and of 3-hydroxy-2-oxo-4-phosphonooxybutanoate to phosphohydroxythreonine. Plays an indirect role in purine biosynthesis. This is Phosphoserine aminotransferase from Saccharomyces cerevisiae (strain ATCC 204508 / S288c) (Baker's yeast).